The primary structure comprises 399 residues: Elongation factor Tu (399 aa).

Residues 10–209 (KPHVNIGTIG…KVDEYIPTPV (200 aa)) enclose the tr-type G domain. The tract at residues 19–26 (GHVDHGKT) is G1. Residue 19 to 26 (GHVDHGKT) coordinates GTP. A Mg(2+)-binding site is contributed by Thr26. The segment at 60 to 64 (GITIA) is G2. Residues 81–84 (DCPG) form a G3 region. Residues 81-85 (DCPGH) and 136-139 (NKAD) contribute to the GTP site. The segment at 136–139 (NKAD) is G4. Positions 174-176 (SAL) are G5.

Belongs to the TRAFAC class translation factor GTPase superfamily. Classic translation factor GTPase family. EF-Tu/EF-1A subfamily. In terms of assembly, monomer.

The protein resides in the cytoplasm. The catalysed reaction is GTP + H2O = GDP + phosphate + H(+). GTP hydrolase that promotes the GTP-dependent binding of aminoacyl-tRNA to the A-site of ribosomes during protein biosynthesis. This is Elongation factor Tu from Campylobacter curvus (strain 525.92).